The chain runs to 189 residues: HGPRTase-like protein (189 aa).

This sequence belongs to the purine/pyrimidine phosphoribosyltransferase family. Archaeal HPRT subfamily.

In terms of biological role, may catalyze a purine salvage reaction, the substrate is unknown. This Halorubrum lacusprofundi (strain ATCC 49239 / DSM 5036 / JCM 8891 / ACAM 34) protein is HGPRTase-like protein.